A 122-amino-acid chain; its full sequence is Large ribosomal subunit protein uL14 (122 aa).

The protein belongs to the universal ribosomal protein uL14 family. As to quaternary structure, part of the 50S ribosomal subunit. Forms a cluster with proteins L3 and L19. In the 70S ribosome, L14 and L19 interact and together make contacts with the 16S rRNA in bridges B5 and B8.

Its function is as follows. Binds to 23S rRNA. Forms part of two intersubunit bridges in the 70S ribosome. This chain is Large ribosomal subunit protein uL14, found in Methylococcus capsulatus (strain ATCC 33009 / NCIMB 11132 / Bath).